Consider the following 343-residue polypeptide: Biotin synthase (343 aa).

The 228-residue stretch at 64–291 folds into the Radical SAM core domain; it reads NTVQLSTLLS…RAMVRLSAGR (228 aa). Cysteine 79, cysteine 83, and cysteine 86 together coordinate [4Fe-4S] cluster. Positions 123, 154, 214, and 286 each coordinate [2Fe-2S] cluster.

The protein belongs to the radical SAM superfamily. Biotin synthase family. Homodimer. [4Fe-4S] cluster serves as cofactor. The cofactor is [2Fe-2S] cluster.

The catalysed reaction is (4R,5S)-dethiobiotin + (sulfur carrier)-SH + 2 reduced [2Fe-2S]-[ferredoxin] + 2 S-adenosyl-L-methionine = (sulfur carrier)-H + biotin + 2 5'-deoxyadenosine + 2 L-methionine + 2 oxidized [2Fe-2S]-[ferredoxin]. The protein operates within cofactor biosynthesis; biotin biosynthesis; biotin from 7,8-diaminononanoate: step 2/2. In terms of biological role, catalyzes the conversion of dethiobiotin (DTB) to biotin by the insertion of a sulfur atom into dethiobiotin via a radical-based mechanism. In Cupriavidus necator (strain ATCC 17699 / DSM 428 / KCTC 22496 / NCIMB 10442 / H16 / Stanier 337) (Ralstonia eutropha), this protein is Biotin synthase.